A 288-amino-acid polypeptide reads, in one-letter code: 3-methyl-2-oxobutanoate hydroxymethyltransferase (288 aa).

Mg(2+) contacts are provided by aspartate 48 and aspartate 87. Residues 48–49, aspartate 87, and lysine 116 contribute to the 3-methyl-2-oxobutanoate site; that span reads DS. Glutamate 118 is a binding site for Mg(2+). Glutamate 185 acts as the Proton acceptor in catalysis.

It belongs to the PanB family. Homodecamer; pentamer of dimers. Mg(2+) serves as cofactor.

It localises to the cytoplasm. The enzyme catalyses 3-methyl-2-oxobutanoate + (6R)-5,10-methylene-5,6,7,8-tetrahydrofolate + H2O = 2-dehydropantoate + (6S)-5,6,7,8-tetrahydrofolate. It participates in cofactor biosynthesis; coenzyme A biosynthesis. Its function is as follows. Catalyzes the reversible reaction in which hydroxymethyl group from 5,10-methylenetetrahydrofolate is transferred onto alpha-ketoisovalerate to form ketopantoate. The protein is 3-methyl-2-oxobutanoate hydroxymethyltransferase of Hyperthermus butylicus (strain DSM 5456 / JCM 9403 / PLM1-5).